A 470-amino-acid chain; its full sequence is Glutamate--tRNA ligase 1 (470 aa).

Positions 15-25 (PSPTGTMHIGT) match the 'HIGH' region motif. The short motif at 241-245 (KLSKR) is the 'KMSKS' region element. Lysine 244 is a binding site for ATP.

Belongs to the class-I aminoacyl-tRNA synthetase family. Glutamate--tRNA ligase type 1 subfamily. Monomer.

The protein localises to the cytoplasm. It carries out the reaction tRNA(Glu) + L-glutamate + ATP = L-glutamyl-tRNA(Glu) + AMP + diphosphate. Its function is as follows. Catalyzes the attachment of glutamate to tRNA(Glu) in a two-step reaction: glutamate is first activated by ATP to form Glu-AMP and then transferred to the acceptor end of tRNA(Glu). The chain is Glutamate--tRNA ligase 1 from Jannaschia sp. (strain CCS1).